Consider the following 133-residue polypeptide: Vascular endothelial growth factor homolog (133 aa).

Positions 1–20 (MKLLVGILVAVCLHQYLLNA) are cleaved as a signal peptide. 3 disulfides stabilise this stretch: Cys-36–Cys-78, Cys-67–Cys-112, and Cys-71–Cys-114. An N-linked (GlcNAc...) asparagine; by host glycan is attached at Asn-85.

This sequence belongs to the PDGF/VEGF growth factor family. Homodimer; disulfide-linked.

It localises to the secreted. Induces endothelial proliferation. In Orf virus (strain NZ2) (OV NZ-2), this protein is Vascular endothelial growth factor homolog.